Consider the following 120-residue polypeptide: Cytochrome b5 (120 aa).

One can recognise a Cytochrome b5 heme-binding domain in the interval 2 to 78 (PKVYSYQEVA…LKGLYIGDVD (77 aa)). Heme-binding residues include histidine 37 and histidine 61. Residues 98-118 (GSGTLVVILAILMLGVAYYLL) form a helical membrane-spanning segment.

The protein belongs to the cytochrome b5 family.

It is found in the endoplasmic reticulum membrane. The protein localises to the microsome membrane. In terms of biological role, membrane bound hemoprotein which function as an electron carrier for several membrane bound oxygenases. It plays a role in fatty-acid desaturation and is also involved in several steps of the sterol biosynthesis pathway, particularly in the 4-demethylation of the 4,4'-dimethyl zymosterol. The sequence is that of Cytochrome b5 (CYB5) from Saccharomyces cerevisiae (strain ATCC 204508 / S288c) (Baker's yeast).